The following is a 176-amino-acid chain: Secreted LysM effector ELP2 (176 aa).

An N-terminal signal peptide occupies residues 1 to 18 (MQFSIFTVLAAAASFAVA). Residues 31–45 (TSAAANPSPTTSGAA) show a composition bias toward low complexity. The disordered stretch occupies residues 31–50 (TSAAANPSPTTSGAANPSPT). A LysM 1 domain is found at 58–102 (HKTTVKAGQTLTTIAERFHSGICDIAWQNKLENPNVIFVGQVLLV). Residue N111 is glycosylated (N-linked (GlcNAc...) asparagine). Positions 129–173 (ATYTIKSGDTFFAVAQSLGITTDSLTGANPGVVPENLQIDQVINV) constitute a LysM 2 domain.

Belongs to the secreted LysM effector family. Forms homodimers in a chitin-independent manner through interactions at the N-termini of EPL2 monomers. Homodimers are further polymerized in a chitin-dependent manner.

The protein localises to the secreted. Functionally, secreted effector that enables the plant pathogenic fungus to manipulate host defenses for successful infection. Binds chitin oligomers and polymer with high affinity and plays a dual role, not only in the suppression of chitin-triggered immune responses, but also in appressorium function. Does not protect fungal hyphae against plant chitinases but suppresses chitin-triggered plant immune responses. Chitin-induced polymerization of homodimers forms a contiguous ELP2 highly oligomeric super-complexe that may precipitate at infection sites to eliminate chitin oligomers, and thus suppress the activation of chitin-induced plant immunity. This is Secreted LysM effector ELP2 from Colletotrichum higginsianum (strain IMI 349063) (Crucifer anthracnose fungus).